A 189-amino-acid chain; its full sequence is Peptide deformylase (189 aa).

The Fe cation site is built by Cys-93 and His-135. Glu-136 is an active-site residue. His-139 serves as a coordination point for Fe cation.

This sequence belongs to the polypeptide deformylase family. It depends on Fe(2+) as a cofactor.

The enzyme catalyses N-terminal N-formyl-L-methionyl-[peptide] + H2O = N-terminal L-methionyl-[peptide] + formate. Its function is as follows. Removes the formyl group from the N-terminal Met of newly synthesized proteins. Requires at least a dipeptide for an efficient rate of reaction. N-terminal L-methionine is a prerequisite for activity but the enzyme has broad specificity at other positions. The protein is Peptide deformylase of Karelsulcia muelleri (strain GWSS) (Sulcia muelleri).